A 66-amino-acid polypeptide reads, in one-letter code: Large ribosomal subunit protein bL35 (66 aa).

Belongs to the bacterial ribosomal protein bL35 family.

The protein is Large ribosomal subunit protein bL35 of Synechococcus sp. (strain RCC307).